We begin with the raw amino-acid sequence, 2281 residues long: Protein Ycf2 (2281 aa).

Residue 1634–1641 coordinates ATP; sequence GSIGTGRS.

It belongs to the Ycf2 family.

The protein resides in the plastid. It localises to the chloroplast stroma. Functionally, probable ATPase of unknown function. Its presence in a non-photosynthetic plant (Epifagus virginiana) and experiments in tobacco indicate that it has an essential function which is probably not related to photosynthesis. This is Protein Ycf2 from Buxus microphylla (Littleleaf boxwood).